The sequence spans 339 residues: Fructose-1,6-bisphosphatase, cytosolic (339 aa).

Residues E71, E100, D121, L123, and D124 each coordinate Mg(2+). Substrate is bound by residues 124–127 (DGSS), N215, Y247, Y267, and K277. E283 contacts Mg(2+).

It belongs to the FBPase class 1 family. Mg(2+) is required as a cofactor.

The protein resides in the cytoplasm. It carries out the reaction beta-D-fructose 1,6-bisphosphate + H2O = beta-D-fructose 6-phosphate + phosphate. In Oryza sativa subsp. indica (Rice), this protein is Fructose-1,6-bisphosphatase, cytosolic.